The chain runs to 34 residues: DDIT3 upstream open reading frame protein (34 aa).

In terms of assembly, interacts with DDIT3 (isoform 1).

It localises to the nucleus. Its subcellular location is the cytoplasm. Its function is as follows. Product of the upstream open reading frame (uORF) of DDIT3/CHOP that is specifically produced in absence of stress, thereby preventing translation of downstream stress effector DDIT3/CHOP. The polypeptide is DDIT3 upstream open reading frame protein (Mus musculus (Mouse)).